Reading from the N-terminus, the 1464-residue chain is Nuclear pore complex protein NUP155 (1464 aa).

An N-acetylserine modification is found at Ser-2.

Belongs to the non-repetitive/WGA-negative nucleoporin family. Part of the nuclear pore complex (NPC). The NPC has an eight-fold symmetrical structure comprising a central transport channel and two rings, the cytoplasmic and nuclear rings, to which eight filaments are attached. The cytoplasmic filaments have loose ends, while the nuclear filaments are joined in a distal ring, forming a nuclear basket. NPCs are highly dynamic in configuration and composition, and can be devided in 3 subcomplexes, the NUP62 subcomplex, the NUP107-160 subcomplex and the NUP93 subcomplex, containing approximately 30 different nucleoporin proteins.

The protein resides in the nucleus. It is found in the nuclear pore complex. Its function is as follows. Major component of the nuclear pore complex (NPC). This is Nuclear pore complex protein NUP155 from Arabidopsis thaliana (Mouse-ear cress).